The sequence spans 313 residues: Tyrosine recombinase XerC (313 aa).

Residues 1–85 (MNDQVEAFLR…AVKSFFAFLT (85 aa)) enclose the Core-binding (CB) domain. Residues 106 to 291 (DLPRALTPHQ…NHASSAQPVR (186 aa)) enclose the Tyr recombinase domain. Residues Arg147, Lys171, His243, Arg246, and His269 contribute to the active site. Tyr278 acts as the O-(3'-phospho-DNA)-tyrosine intermediate in catalysis.

It belongs to the 'phage' integrase family. XerC subfamily. As to quaternary structure, forms a cyclic heterotetrameric complex composed of two molecules of XerC and two molecules of XerD.

The protein resides in the cytoplasm. Functionally, site-specific tyrosine recombinase, which acts by catalyzing the cutting and rejoining of the recombining DNA molecules. The XerC-XerD complex is essential to convert dimers of the bacterial chromosome into monomers to permit their segregation at cell division. It also contributes to the segregational stability of plasmids. The chain is Tyrosine recombinase XerC from Roseiflexus sp. (strain RS-1).